The primary structure comprises 682 residues: MSRKQLALFEPTLVVQALKEAVKKLNPQAQWRNPVMFIVWIGSLLTTCISIAMASGAMPGNALFSAAISGWLWVTVLFANFAEALAEGRSKAQANSLKGVKKTAFARKLREPKYGAAADKVPADQLRKGDIVLVEAGDIIPCDGEVIEGGASVDESAITGESAPVIRESGGDFASVTGGTRILSDWLVIECSVNPGETFLDRMIAMVEGAQRRKTPNEIALTILLIALTIVFLLATATLWPFSAWGGNAVSVTVLVALLVCLIPTTIGGLLSAIGVAGMSRMLGANVIATSGRAVEAAGDVDVLLLDKTGTITLGNRQASEFIPAQGVDEKTLADAAQLASLADETPEGRSIVILAKQRFNLRERDVQSLHATFVPFTAQSRMSGINIDNRMIRKGSVDAIRRHVEANGGHFPADVDQKVDQVARQGATPLVVVEGSRVLGVIALKDIVKGGIKERFAQLRKMGIKTVMITGDNRLTAAAIAAEAGVDDFLAEATPEAKLALIRQYQAEGRLVAMTGDGTNDAPALAQADIAVAMNSGTQAAKEAGNMVDLDSNPTKLIEVVHIGKQMLMTRGSLTTFSITNDVAKYFAIIPAAFAATYPQLNALNIMRLHSPDSAILSAVIFNALIIVFLIPLALKGVSYKPLTASAMLRRNLWIYGLGGLLVPFIGIKVIDLLLTVCGLV.

The next 4 membrane-spanning stretches (helical) occupy residues 34–54, 62–82, 219–239, and 254–274; these read PVMF…IAMA, ALFS…ANFA, IALT…TATL, and VLVA…LSAI. Aspartate 307 acts as the 4-aspartylphosphate intermediate in catalysis. ATP is bound by residues aspartate 344, glutamate 348, 377 to 384, and lysine 395; that span reads FTAQSRMS. Positions 518 and 522 each coordinate Mg(2+). 3 helical membrane passes run 588-608, 616-636, and 656-676; these read FAII…LNIM, AILS…PLAL, and IYGL…DLLL.

The protein belongs to the cation transport ATPase (P-type) (TC 3.A.3) family. Type IA subfamily. As to quaternary structure, the system is composed of three essential subunits: KdpA, KdpB and KdpC.

It is found in the cell inner membrane. The catalysed reaction is K(+)(out) + ATP + H2O = K(+)(in) + ADP + phosphate + H(+). In terms of biological role, part of the high-affinity ATP-driven potassium transport (or Kdp) system, which catalyzes the hydrolysis of ATP coupled with the electrogenic transport of potassium into the cytoplasm. This subunit is responsible for energy coupling to the transport system and for the release of the potassium ions to the cytoplasm. This chain is Potassium-transporting ATPase ATP-binding subunit, found in Shigella boydii serotype 4 (strain Sb227).